A 220-amino-acid polypeptide reads, in one-letter code: Splicing factor U2AF 26 kDa subunit (220 aa).

The residue at position 2 (Ala2) is an N-acetylalanine. A C3H1-type 1 zinc finger spans residues 12 to 40 (EKDKVNCSFYFKIGACRHGDRCSRLHNKP). Residues 65–147 (SHCHVSDVEV…QAVHAELSPV (83 aa)) form the RRM domain. The C3H1-type 2 zinc-finger motif lies at 149-176 (DFRESCCRQYEMGECTRGGFCNFMHLRP). A disordered region spans residues 186 to 220 (YGRGPRRRSPPRSHTGHRPRERNRRRSPDHRHGRF). Positions 189–220 (GPRRRSPPRSHTGHRPRERNRRRSPDHRHGRF) are enriched in basic residues.

Belongs to the splicing factor SR family. As to quaternary structure, interacts with GFI1, U2AF2 and C1QBP.

The protein localises to the nucleus. It localises to the nucleus speckle. It is found in the cytoplasm. RNA-binding protein that function as a pre-mRNA splicing factor. Plays a critical role in both constitutive and enhancer-dependent splicing by mediating protein-protein interactions and protein-RNA interactions required for accurate 3'-splice site selection. Acts by enhancing the binding of U2AF2 to weak pyrimidine tracts. Also participates in the regulation of alternative pre-mRNA splicing. Activates exon 5 skipping of PTPRC during T-cell activation; an event reversed by GFI1. Binds to RNA at the AG dinucleotide at the 3'-splice site. Shows a preference for AGC or AGA. The chain is Splicing factor U2AF 26 kDa subunit (U2AF1L4) from Bos taurus (Bovine).